Reading from the N-terminus, the 281-residue chain is Secretory carrier-associated membrane protein 5 (281 aa).

The interval 1-49 (MHHDPNPFDEGADDNPFSNGGGGGARRGGGGGGGGGGGGGKSQFSFGFG) is disordered. The Cytoplasmic segment spans residues 1-139 (MHHDPNPFDE…AQKLQYLAFA (139 aa)). Over residues 19 to 49 (NGGGGGARRGGGGGGGGGGGGGKSQFSFGFG) the composition is skewed to gly residues. The stretch at 76–102 (KELLQWEADLKRREADIRRREEALKSA) forms a coiled coil. A run of 4 helical transmembrane segments spans residues 140–160 (SWLG…VCWI), 167–187 (LFFL…LMWY), 202–222 (FGWF…AAIA), and 250–270 (IFYF…IWVL). The Cytoplasmic portion of the chain corresponds to 271 to 281 (QKVYMYFRGHK).

It belongs to the SCAMP family.

It is found in the cell membrane. The protein localises to the cytoplasmic vesicle. The protein resides in the secretory vesicle membrane. Probably involved in membrane trafficking. This Oryza sativa subsp. japonica (Rice) protein is Secretory carrier-associated membrane protein 5 (SCAMP5).